We begin with the raw amino-acid sequence, 597 residues long: Phragmoplastin interacting protein 1 (597 aa).

A disordered region spans residues 18–136 (ESLSVSVSET…KTPKKAEEGN (119 aa)). The segment covering 20-29 (LSVSVSETNP) has biased composition (polar residues). Positions 30–40 (QSQSLKLLLDS) are enriched in low complexity. 2 stretches are compositionally biased toward basic residues: residues 43 to 53 (HKPRLSKREKR) and 112 to 129 (QKKKNKKKKKKRKVNKTP). The short motif at 112–119 (QKKKNKKK) is the Nuclear localization signal element. RRM domains follow at residues 161-238 (NKLY…QYVK) and 262-338 (NRVY…CALK). CCHC-type zinc fingers lie at residues 397–411 (CYECGEKGHLSTACP), 481–495 (CYECGEKGHLSTACP), and 576–591 (CYECGEKGHLSSACPN).

Interacts with phragmoplastins (e.g. DRP1A, DRP1B, DRP1C, DRP1D and DRP1E) and with GTP-bound ARAC11/ROP1 as well as with Ran2 transcripts.

It is found in the nucleus. The protein localises to the cell membrane. The protein resides in the cytoplasm. Its subcellular location is the cytoskeleton. It localises to the phragmoplast. RNA-binding protein which mediates polarized mRNA (e.g. Ran2 transcripts mRNA) transport from the nucleus to the vicinity of the cell plate during cytokinesis and phragmoplast formation. This is Phragmoplastin interacting protein 1 from Arabidopsis thaliana (Mouse-ear cress).